The chain runs to 289 residues: 4-diphosphocytidyl-2-C-methyl-D-erythritol kinase (289 aa).

The active site involves lysine 10. 94-104 provides a ligand contact to ATP; the sequence is PVAAGLAGGSS. The active site involves aspartate 136.

Belongs to the GHMP kinase family. IspE subfamily.

The enzyme catalyses 4-CDP-2-C-methyl-D-erythritol + ATP = 4-CDP-2-C-methyl-D-erythritol 2-phosphate + ADP + H(+). The protein operates within isoprenoid biosynthesis; isopentenyl diphosphate biosynthesis via DXP pathway; isopentenyl diphosphate from 1-deoxy-D-xylulose 5-phosphate: step 3/6. Functionally, catalyzes the phosphorylation of the position 2 hydroxy group of 4-diphosphocytidyl-2C-methyl-D-erythritol. The polypeptide is 4-diphosphocytidyl-2-C-methyl-D-erythritol kinase (Bacillus licheniformis (strain ATCC 14580 / DSM 13 / JCM 2505 / CCUG 7422 / NBRC 12200 / NCIMB 9375 / NCTC 10341 / NRRL NRS-1264 / Gibson 46)).